The chain runs to 441 residues: UDP-N-acetylglucosamine--N-acetylmuramyl-(pentapeptide) pyrophosphoryl-undecaprenol N-acetylglucosamine transferase (441 aa).

Residues Thr-28–Gly-30, Asn-140, Arg-176, Ser-204, Ile-257, and Gln-302 each bind UDP-N-acetyl-alpha-D-glucosamine.

Belongs to the glycosyltransferase 28 family. MurG subfamily.

It localises to the cell inner membrane. The catalysed reaction is di-trans,octa-cis-undecaprenyl diphospho-N-acetyl-alpha-D-muramoyl-L-alanyl-D-glutamyl-meso-2,6-diaminopimeloyl-D-alanyl-D-alanine + UDP-N-acetyl-alpha-D-glucosamine = di-trans,octa-cis-undecaprenyl diphospho-[N-acetyl-alpha-D-glucosaminyl-(1-&gt;4)]-N-acetyl-alpha-D-muramoyl-L-alanyl-D-glutamyl-meso-2,6-diaminopimeloyl-D-alanyl-D-alanine + UDP + H(+). It functions in the pathway cell wall biogenesis; peptidoglycan biosynthesis. Its function is as follows. Cell wall formation. Catalyzes the transfer of a GlcNAc subunit on undecaprenyl-pyrophosphoryl-MurNAc-pentapeptide (lipid intermediate I) to form undecaprenyl-pyrophosphoryl-MurNAc-(pentapeptide)GlcNAc (lipid intermediate II). The chain is UDP-N-acetylglucosamine--N-acetylmuramyl-(pentapeptide) pyrophosphoryl-undecaprenol N-acetylglucosamine transferase from Xanthomonas oryzae pv. oryzae (strain MAFF 311018).